The sequence spans 128 residues: Sm-like protein LSM1B (128 aa).

A Sm domain is found at 10–85 (YLSTSLASYL…VVLIGELDTE (76 aa)).

The protein belongs to the snRNP Sm proteins family. As to quaternary structure, component of the heptameric LSM1-LSM7 complex that forms a seven-membered ring structure with a donut shape. The LSM subunits are arranged in the order LSM1, LSM2, LSM3, LSM6, LSM5, LSM7 and LSM4. LSM1B subunit interacts only with its two neighboring subunits, LSM2 and LSM4. In terms of tissue distribution, expressed in roots, leaves, stems, flowers and siliques.

Its subcellular location is the cytoplasm. The protein localises to the P-body. In terms of biological role, component of the cytoplasmic LSM1-LSM7 complex which is involved in mRNA degradation by promoting decapping and leading to accurate 5'-3' mRNA decay. LSM1A and LSM1B are essential for the formation of the cytoplasmic LSM1-LSM7 complex which regulates developmental gene expression by the decapping of specific development-related transcripts. Required for P-body formation during heat stress. The chain is Sm-like protein LSM1B from Arabidopsis thaliana (Mouse-ear cress).